Reading from the N-terminus, the 609-residue chain is MSNVDPFLLYGTRETEAKPTHLKAGLLSLDLNDGNLRTITYDGVEVLRAVSYLVRDRDWGTYNPQIHDLNVEQSDSGFIVTYQARCEGPDATKLTIDVCIQAKSGGTLTFDAVANTATGFETNRCGFCILHPIVGVAGSPVRVEHVDGTLDRTQLPYLIEPWQPFKDMRAITHEAMPGVTAECRMEGDTFEMEDQRNWSDASYKTYVRPLALPWPYQIEASKPQHQRIVLNISDTRKAALQAGMNAEPVSITLGNTSGKLPNIGIIITPEEAKASLAAIDLLQEIDPQDLLFQYDPMAGHNGSAFADFATLAAKHSARVSLEIALPCEKSLIEETTAIASDMKAAGFNPDAVIVSPAIDRQSTPPGSEWPTCPPLEDVYAAARAAFPNARLGGGMLSYFTELNRKCVPGELVDFVTHCTNPIVHAADDLSVMQTLEALPFITRSVRAVYGDKPYRIGPSTIPMRQNPYGSRTMENPNGKRIAMANRDPRHNGKFAESFALAYAISVLNAGLDSLTLSALTGPFGLTAGEGEPTLAGGKRPLFTTIKTLSGLAGKDWWQLISSRPDHVLAFATEHEFWLVNITSQPQTVSIAQFAKITLDPYAVQNLKRS.

The catalysed reaction is D-apionolactone + H2O = D-apionate + H(+). Its pathway is carbohydrate metabolism. In terms of biological role, involved in catabolism of D-apiose. Hydrolyzes D-apionolactone to D-apionate. The polypeptide is D-apionate lactonase (Brucella anthropi (strain ATCC 49188 / DSM 6882 / CCUG 24695 / JCM 21032 / LMG 3331 / NBRC 15819 / NCTC 12168 / Alc 37) (Ochrobactrum anthropi)).